The chain runs to 349 residues: MKFSDIISKLEVTNHSLTQNPNNDPEITGMAAIDEATSANLSYIEGAKFASFIAQTNASALILPQNEAMQAQAQARGIVWMTTPEPRLLFAKAIALFYQPYTPTPEIHPTAVIHPTAKIGNDVYIGPHVVIQPGVEIGNGVIIHPNVVIYPYVKIGDRSILHANCTIEERSQIGADCIIHSGAVIGGEGFGFVPTRTGWYKMEQSGYVVLEDRVDIGCNTTIDRPSVGETRVGYDTKIDNLVQIAHGCQIGAGCAIAAQTGMAGGVKLGKRVILAGQVGIANQAKMGDGSTASAQTGILHDVKPGEVVSGTPAIPHKIYLKIGAIYSRLPEMYQAFRQLQRQSDKESKR.

His-246 (proton acceptor) is an active-site residue.

This sequence belongs to the transferase hexapeptide repeat family. LpxD subfamily. In terms of assembly, homotrimer.

It catalyses the reaction a UDP-3-O-[(3R)-3-hydroxyacyl]-alpha-D-glucosamine + a (3R)-hydroxyacyl-[ACP] = a UDP-2-N,3-O-bis[(3R)-3-hydroxyacyl]-alpha-D-glucosamine + holo-[ACP] + H(+). It functions in the pathway bacterial outer membrane biogenesis; LPS lipid A biosynthesis. Functionally, catalyzes the N-acylation of UDP-3-O-acylglucosamine using 3-hydroxyacyl-ACP as the acyl donor. Is involved in the biosynthesis of lipid A, a phosphorylated glycolipid that anchors the lipopolysaccharide to the outer membrane of the cell. The chain is UDP-3-O-acylglucosamine N-acyltransferase from Nostoc sp. (strain PCC 7120 / SAG 25.82 / UTEX 2576).